A 243-amino-acid polypeptide reads, in one-letter code: Thaumatin-like protein 1 (243 aa).

An N-terminal signal peptide occupies residues 1–22 (MMKTLALYGLTLALFFLSGAHS). Intrachain disulfides connect cysteine 31/cysteine 242, cysteine 79/cysteine 88, cysteine 93/cysteine 100, cysteine 148/cysteine 231, cysteine 153/cysteine 214, cysteine 161/cysteine 177, cysteine 181/cysteine 190, and cysteine 191/cysteine 201.

The protein belongs to the thaumatin family.

The protein resides in the secreted. It localises to the extracellular space. The protein localises to the apoplast. Functionally, possesses antifungal activity. The polypeptide is Thaumatin-like protein 1 (TL1) (Castanea sativa (Sweet chestnut)).